A 466-amino-acid chain; its full sequence is Zinc finger protein ZIC 3 (466 aa).

Positions 65 to 80 (DLSSGQSSAFTPQGSG) are enriched in polar residues. Residues 65 to 103 (DLSSGQSSAFTPQGSGYANALGHHHHHHHHHHASQVPTY) form a disordered region. The span at 86-97 (GHHHHHHHHHHA) shows a compositional bias: basic residues. K247 participates in a covalent cross-link: Glycyl lysine isopeptide (Lys-Gly) (interchain with G-Cter in SUMO2). The segment at 250–285 (LSCKWIEEAQLSRPKKSCDRTFSTMHELVTHVTMEH) adopts a C2H2-type 1; atypical zinc-finger fold. A C2H2-type 2; atypical zinc finger spans residues 294 to 321 (HVCYWEECPREGKSFKAKYKLVNHIRVH). Short sequence motifs (nuclear localization signal) lie at residues 296 to 321 (CYWEECPREGKSFKAKYKLVNHIRVH) and 329 to 351 (CPFPGCGKIFARSENLKIHKRTH). 3 consecutive C2H2-type zinc fingers follow at residues 327–351 (FPCPFPGCGKIFARSENLKIHKRTH), 357–381 (FKCEFEGCDRRFANSSDRKKHMHVH), and 387–409 (YICKVCDKSYTHPSSLRKHMKVH). Residues 403–466 (RKHMKVHESQ…LPPNFNEWYV (64 aa)) form a disordered region. Residues 411–427 (SQGSDSSPAASSGYESS) show a composition bias toward low complexity. The span at 434-454 (SANSKDTTKTPSAVQTSTSHN) shows a compositional bias: polar residues.

Belongs to the GLI C2H2-type zinc-finger protein family. As to quaternary structure, interacts with KPNA1 and KPNA6. Interacts (via C2H2-type domains 3, 4 and 5) with GLI3; the interaction enhances its transcriptional activity. Interacts (via the C2H2-type domains 3, 4 and 5) with MDFIC (via the C2H2-type domains 3, 4 and 5); the interaction reduces its transcriptional activity. As to expression, CNS. A high level expression is seen in the cerebellum.

It localises to the nucleus. The protein resides in the cytoplasm. In terms of biological role, acts as a transcriptional activator. Required in the earliest stages in both axial midline development and left-right (LR) asymmetry specification. Binds to the minimal GLI-consensus sequence 5'-GGGTGGTC-3'. This is Zinc finger protein ZIC 3 (Zic3) from Mus musculus (Mouse).